Consider the following 716-residue polypeptide: Exocyst complex component 8 (716 aa).

The residue at position 15 (Ser15) is a Phosphoserine. Over residues 110–119 (STGEDTAGAG) the composition is skewed to low complexity. The interval 110 to 149 (STGEDTAGAGPRERGAAQAGFLPGPAGVPREGPGTGEEGK) is disordered. Positions 173 to 273 (YLVYNGDLVE…WLEVLEETKR (101 aa)) constitute a PH domain. The segment covering 275–284 (LSDKRRREQE) has biased composition (basic and acidic residues). The segment at 275–319 (LSDKRRREQEEAAALRAPPPVTSKGSNPFEDEAEEELATPEAEEE) is disordered. Positions 303–319 (FEDEAEEELATPEAEEE) are enriched in acidic residues. Thr313 is subject to Phosphothreonine.

Belongs to the EXO84 family. In terms of assembly, the exocyst complex is composed of EXOC1, EXOC2, EXOC3, EXOC4, EXOC5, EXOC6, EXOC7 and EXOC8. Interacts (via PH domain) with GTP-bound RALA and RALB. Interacts with SH3BP1; required for the localization of both SH3BP1 and the exocyst to the leading edge of migrating cells.

Its subcellular location is the cytoplasm. The protein localises to the perinuclear region. The protein resides in the cell projection. It localises to the growth cone. Component of the exocyst complex involved in the docking of exocytic vesicles with fusion sites on the plasma membrane. In Rattus norvegicus (Rat), this protein is Exocyst complex component 8 (Exoc8).